The chain runs to 239 residues: LexA repressor (239 aa).

The segment at residues 26 to 46 (FDEMKDALDLASKSGIHRLIT) is a DNA-binding region (H-T-H motif). Active-site for autocatalytic cleavage activity residues include S159 and K197.

This sequence belongs to the peptidase S24 family. As to quaternary structure, homodimer.

It carries out the reaction Hydrolysis of Ala-|-Gly bond in repressor LexA.. Functionally, represses a number of genes involved in the response to DNA damage (SOS response), including recA and lexA. In the presence of single-stranded DNA, RecA interacts with LexA causing an autocatalytic cleavage which disrupts the DNA-binding part of LexA, leading to derepression of the SOS regulon and eventually DNA repair. The protein is LexA repressor of Rhizobium etli (strain CIAT 652).